A 171-amino-acid polypeptide reads, in one-letter code: uncharacterized protein (171 aa).

Residues 5–25 traverse the membrane as a helical segment; it reads FLLTIFALWVGGFGYYLYLIN.

The protein localises to the membrane. This is an uncharacterized protein from Rickettsia conorii (strain ATCC VR-613 / Malish 7).